We begin with the raw amino-acid sequence, 429 residues long: Glucose-1-phosphate adenylyltransferase (429 aa).

Residues Gly-162, 177–178 (EK), and Ser-209 each bind alpha-D-glucose 1-phosphate.

It belongs to the bacterial/plant glucose-1-phosphate adenylyltransferase family. Homotetramer.

It catalyses the reaction alpha-D-glucose 1-phosphate + ATP + H(+) = ADP-alpha-D-glucose + diphosphate. Its pathway is glycan biosynthesis; glycogen biosynthesis. Its function is as follows. Involved in the biosynthesis of ADP-glucose, a building block required for the elongation reactions to produce glycogen. Catalyzes the reaction between ATP and alpha-D-glucose 1-phosphate (G1P) to produce pyrophosphate and ADP-Glc. The sequence is that of Glucose-1-phosphate adenylyltransferase from Rippkaea orientalis (strain PCC 8801 / RF-1) (Cyanothece sp. (strain PCC 8801)).